Here is a 1580-residue protein sequence, read N- to C-terminus: MATPTVIKILGRDSIVADPGIWKRHVAQDLLTNCPSSTYILISDTTLTPLYVPSFQQAFEAAASSVTPKPRLLTYAIPPGEVSKSRQTKAEIEDWMLSRQPPCGRDTVIIALGGGVIGDLIGYVSATYMRGVRFVQVPTTLLAMVDSSIGGKTAIDTTHGKNLIGAIWQPEKIYLDMEFLNTLPEREFINGMAETAAISSEEDFAALERNADAILAAVKSENTTERPRFSGIQEILKLTILASARFKADVVSKDEREGGLRNLLNFGHSIGHAIEGILAPQILHGECVAIGMVKEAELARHLGILKSVAVSRLVKCLASYGLPTSLKDSRVRRLSAGKHCSVEQLLAFMAVDKKNAGPMKKVVLLSSIGSTHEQKASVVSNKDIKIVLAPSIEVSPGVPHALEITCVPPGSKSISNRALVLAALGSGTCRIKNLLHSDDTEVMLSALERLGAATFSWEEEGEVLVVHGKGGRLQASPDALYLGNAGTASRFLTTVATLANKSTVDSTILTGNARMKQRPIGALVDSLRTNGAGIKYMETTGCLPLKIDASGGFAGGHISLAAKVSSQYVSSLLMCAPYAKEPVTLKLVGGKPISQPYIDMTTAMMRSFGIDVKKSTSEEHTYHIPQGRYMNPTEYIIESDASSATYPLAVAAITGTTCTIPNIGSKSLQGDARFAVDVLRPMGCEVNQSSFSTTVTGPRNGALNALPNVDMEPMTDAFLTASVLAAVATAGSTSTTRIFGIANQRVKECNRIKAMKDELAKFGVTCREHEDGLEIDGIDRSALLRLPHGVYCYDDHRVAMSFSVLSLAASHPTLILEKECVGKTWPAWWDTLAQLFKANLEGVELKSEKKKAEKPAASLFIIGMRGAGKTTSGLWASKVLKRPFIDLDVELESKLGKSIPEIIKEQGWEGFRANELALLRQVLSEKPTGYVFACGGGIVETEEARDLLTQYQKAHGNVLLVMRDINAVMDFLKIDKTRPAYVEDMMGVWLRRKPWFQQCSNIQYYSQQSDPSKMGSALESFSRFLRVVTGEVDHLALMKKKPQSFFVSLTLPDLRPSVDILNDITLGSDAVELRVDLLVDPSSSSEMPSVDYVAEQISILRSRVSVPLVFTIRTKSQGGRFPDDAHNAALDLYRLAIRMGSEFVDLEVTFPEYVLRAVTEMKGVSKIIASHHDVANRLSWRNGSWTQFYNKALQYGDIIKLVGIASQLDDNIALREFKIWAKKAHDIPVIAINMGERGRLSRILNGFMTPVSHPKLPFKAAPGQLSAKEIREGLSLMGEIESKKFAIVGKPISASRSPALHNALFADVGLPHVYGRLETDDVQNVKDLIHAPDFGGASITIPLKLDIMPLLDEIAPEAKVIGAVNTIVPAPREPGDVKKGPRLIGYNTDWQGMVQCLRHGGAVSPSTSNDPAPGLVIGGGGTARAAIHALHSMGYSPIYLVGRSESKLNDMALSFPATYNLQILKDAESLEILPSVAIGTIPGDQPIDPSMREVLCRLFEMAARIDAELKELAPKRVLLEMAYKPTVTPLSQLASDCGWATIPGLEALVGQGVYQFQLWTGITPVFRDARAAVMNADADI.

The segment at 1–381 (MATPTVIKIL…HEQKASVVSN (381 aa)) is 3-dehydroquinate synthase. Residues 44-46 (DTT), 81-84 (EVSK), 114-116 (GGV), and aspartate 119 contribute to the NAD(+) site. Residue arginine 130 coordinates 7-phospho-2-dehydro-3-deoxy-D-arabino-heptonate. Residue 139–140 (TT) participates in NAD(+) binding. 7-phospho-2-dehydro-3-deoxy-D-arabino-heptonate-binding residues include aspartate 146 and lysine 152. Lysine 161 lines the NAD(+) pocket. Asparagine 162 contributes to the 7-phospho-2-dehydro-3-deoxy-D-arabino-heptonate binding site. NAD(+) contacts are provided by residues 179-182 (FLNT) and asparagine 190. Glutamate 194 provides a ligand contact to Zn(2+). Residue lysine 247 coordinates 7-phospho-2-dehydro-3-deoxy-D-arabino-heptonate. Glutamate 257 acts as the Proton acceptor; for 3-dehydroquinate synthase activity in catalysis. 7-phospho-2-dehydro-3-deoxy-D-arabino-heptonate-binding positions include 261 to 265 (RNLLN) and histidine 268. Position 268 (histidine 268) interacts with Zn(2+). The active-site Proton acceptor; for 3-dehydroquinate synthase activity is histidine 272. 7-phospho-2-dehydro-3-deoxy-D-arabino-heptonate is bound by residues histidine 284 and lysine 353. Histidine 284 serves as a coordination point for Zn(2+). An EPSP synthase region spans residues 394-838 (VSPGVPHALE…WDTLAQLFKA (445 aa)). The For EPSP synthase activity role is filled by cysteine 820. The segment at 857-1048 (ASLFIIGMRG…KKKPQSFFVS (192 aa)) is shikimate kinase. 863–870 (GMRGAGKT) contacts ATP. Residues 1049–1269 (LTLPDLRPSV…AAPGQLSAKE (221 aa)) form a 3-dehydroquinase region. Histidine 1172 acts as the Proton acceptor; for 3-dehydroquinate dehydratase activity in catalysis. The Schiff-base intermediate with substrate; for 3-dehydroquinate dehydratase activity role is filled by lysine 1200. The shikimate dehydrogenase stretch occupies residues 1282–1580 (SKKFAIVGKP…AAVMNADADI (299 aa)).

The protein in the N-terminal section; belongs to the sugar phosphate cyclases superfamily. Dehydroquinate synthase family. In the 2nd section; belongs to the EPSP synthase family. This sequence in the 3rd section; belongs to the shikimate kinase family. It in the 4th section; belongs to the type-I 3-dehydroquinase family. The protein in the C-terminal section; belongs to the shikimate dehydrogenase family. In terms of assembly, homodimer. Requires Zn(2+) as cofactor.

It is found in the cytoplasm. It carries out the reaction 7-phospho-2-dehydro-3-deoxy-D-arabino-heptonate = 3-dehydroquinate + phosphate. The enzyme catalyses 3-dehydroquinate = 3-dehydroshikimate + H2O. The catalysed reaction is shikimate + NADP(+) = 3-dehydroshikimate + NADPH + H(+). It catalyses the reaction shikimate + ATP = 3-phosphoshikimate + ADP + H(+). It carries out the reaction 3-phosphoshikimate + phosphoenolpyruvate = 5-O-(1-carboxyvinyl)-3-phosphoshikimate + phosphate. It participates in metabolic intermediate biosynthesis; chorismate biosynthesis; chorismate from D-erythrose 4-phosphate and phosphoenolpyruvate: step 2/7. The protein operates within metabolic intermediate biosynthesis; chorismate biosynthesis; chorismate from D-erythrose 4-phosphate and phosphoenolpyruvate: step 3/7. Its pathway is metabolic intermediate biosynthesis; chorismate biosynthesis; chorismate from D-erythrose 4-phosphate and phosphoenolpyruvate: step 4/7. It functions in the pathway metabolic intermediate biosynthesis; chorismate biosynthesis; chorismate from D-erythrose 4-phosphate and phosphoenolpyruvate: step 5/7. It participates in metabolic intermediate biosynthesis; chorismate biosynthesis; chorismate from D-erythrose 4-phosphate and phosphoenolpyruvate: step 6/7. The AROM polypeptide catalyzes 5 consecutive enzymatic reactions in prechorismate polyaromatic amino acid biosynthesis. The protein is Pentafunctional AROM polypeptide of Uncinocarpus reesii (strain UAMH 1704).